A 298-amino-acid chain; its full sequence is Porphobilinogen deaminase (298 aa).

Position 239 is an S-(dipyrrolylmethanemethyl)cysteine (Cys239).

The protein belongs to the HMBS family. As to quaternary structure, monomer. Dipyrromethane is required as a cofactor.

The enzyme catalyses 4 porphobilinogen + H2O = hydroxymethylbilane + 4 NH4(+). The protein operates within porphyrin-containing compound metabolism; protoporphyrin-IX biosynthesis; coproporphyrinogen-III from 5-aminolevulinate: step 2/4. In terms of biological role, tetrapolymerization of the monopyrrole PBG into the hydroxymethylbilane pre-uroporphyrinogen in several discrete steps. In Orientia tsutsugamushi (strain Boryong) (Rickettsia tsutsugamushi), this protein is Porphobilinogen deaminase.